The sequence spans 335 residues: Pregnancy-specific beta-1-glycoprotein 2 (335 aa).

The first 34 residues, Met-1–Ala-34, serve as a signal peptide directing secretion. The Ig-like V-type domain maps to Gln-35–Leu-144. Residues Asn-61, Asn-104, Asn-111, and Asn-199 are each glycosylated (N-linked (GlcNAc...) asparagine). Ig-like C2-type domains are found at residues Pro-147–Asn-234 and Pro-239–Thr-317. Disulfide bonds link Cys-169/Cys-217 and Cys-261/Cys-301.

This sequence belongs to the immunoglobulin superfamily. CEA family.

It localises to the secreted. This chain is Pregnancy-specific beta-1-glycoprotein 2 (PSG2), found in Homo sapiens (Human).